Reading from the N-terminus, the 949-residue chain is Glutamate receptor ionotropic, kainate 1 (949 aa).

A signal peptide spans 1–30; that stretch reads MERSTVLIQPGLWTRDTSWTLLYFLCYILP. The Extracellular segment spans residues 31–576; sequence QTSPQVLRIG…VFSFLNPLSP (546 aa). N-linked (GlcNAc...) asparagine glycosylation is found at N68, N74, N276, N379, N428, N439, and N446. The L-glutamate site is built by P531, T533, and R538. N561 is a glycosylation site (N-linked (GlcNAc...) asparagine). Residues 577–597 form a helical membrane-spanning segment; sequence DIWMYVLLACLGVSCVLFVIA. The Cytoplasmic segment spans residues 598 to 653; that stretch reads RFTPYEWYNPHPCNPDSDVVENNFTLLNSFWFGVGALMQQGSELMPKALSTRIVGG. The helical transmembrane segment at 654–674 threads the bilayer; that stretch reads IWWFFTLIIISSYTANLAAFL. Topologically, residues 675 to 834 are extracellular; sequence TVERMESPID…KEASALGVEN (160 aa). The L-glutamate site is built by S704 and T705. Position 725 is a phosphoserine; by PKC (S725). Position 753 (E753) interacts with L-glutamate. Position 761 is a phosphothreonine; by PKC (T761). C765 and C819 are joined by a disulfide. The N-linked (GlcNAc...) asparagine glycan is linked to N766. Residues 835-855 traverse the membrane as a helical segment; it reads IGGIFIVLAAGLVLSVFVAIG. Residues 856–949 lie on the Cytoplasmic side of the membrane; the sequence is EFLYKSRKNN…RRTQRKETVA (94 aa).

This sequence belongs to the glutamate-gated ion channel (TC 1.A.10.1) family. GRIK1 subfamily. As to quaternary structure, homotetramer or heterotetramer of pore-forming glutamate receptor subunits. Tetramers may be formed by the dimerization of dimers. Can form functional heteromeric receptors with GRIK4 and GRIK5. Interacts with KLHL17. As to expression, expressed in the olfactory bulb (at protein level). Expressed in subsets of neurons throughout the developing and adult central and peripheral nervous systems. In the CNS principally in the medial amygdaloid nuclei, medial habenulae, pyriform and cingulate cortices, and Purkinje cell layer. Also highly expressed in embryonic and adult dorsal root ganglia. Expressed at high levels in the trigeminal ganglion neurons.

It localises to the cell membrane. The protein resides in the postsynaptic cell membrane. The enzyme catalyses Ca(2+)(in) = Ca(2+)(out). Its function is as follows. Ionotropic glutamate receptor that functions as a cation-permeable ligand-gated ion channel, gated by L-glutamate and the glutamatergic agonist kainic acid. L-glutamate acts as an excitatory neurotransmitter at many synapses in the central nervous system. Binding of the excitatory neurotransmitter L-glutamate induces a conformation change, leading to the opening of the cation channel, and thereby converts the chemical signal to an electrical impulse. The receptor then desensitizes rapidly and enters a transient inactive state, characterized by the presence of bound agonist. This is Glutamate receptor ionotropic, kainate 1 (Grik1) from Rattus norvegicus (Rat).